A 187-amino-acid chain; its full sequence is Dihydrofolate reductase 2, mitochondrial (187 aa).

The 182-residue stretch at 4–185 folds into the DHFR domain; it reads LLNCIVAVSQ…IKYKFEVCEK (182 aa). NADP(+)-binding positions include A10 and 16–22; that span reads GIGKNGD. Substrate is bound at residue 31-36; the sequence is EFRYFQ. NADP(+) is bound at residue 55–57; the sequence is RKT. R71 provides a ligand contact to substrate. Residues 77-79 and 117-124 each bind NADP(+); these read SRE and GGSSVYKE.

It belongs to the dihydrofolate reductase family. In terms of tissue distribution, expressed in numerous cell lines.

Its subcellular location is the mitochondrion. It is found in the mitochondrion matrix. The protein localises to the mitochondrion inner membrane. It catalyses the reaction (6S)-5,6,7,8-tetrahydrofolate + NADP(+) = 7,8-dihydrofolate + NADPH + H(+). It functions in the pathway cofactor biosynthesis; tetrahydrofolate biosynthesis; 5,6,7,8-tetrahydrofolate from 7,8-dihydrofolate: step 1/1. Its function is as follows. Key enzyme in folate metabolism. Contributes to the de novo mitochondrial thymidylate biosynthesis pathway. Required to prevent uracil accumulation in mtDNA. Binds its own mRNA and that of DHFR. The chain is Dihydrofolate reductase 2, mitochondrial from Homo sapiens (Human).